The following is a 797-amino-acid chain: Short transient receptor potential channel 4-associated protein (797 aa).

Residue A2 is modified to N-acetylalanine. The interaction with TNFRSF1A stretch occupies residues 2–400; the sequence is AAAPVAAGSG…VLYVLCVLLM (399 aa).

In terms of assembly, component of the DCX(TRPC4AP) E3 ubiquitin ligase complex, at least composed of CUL4A, DDB1, TRPC4AP/TRUSS and RBX1. Interacts with MYC. Constitutively associated with TNFRSF1A. Directly interacts with TRADD, TRAF2, CHUK, IKBKB and IKBKG. Interacts with TRPC1, TRPC4 and TRPC5. As to quaternary structure, (Microbial infection) Interacts with Hepatitis B virus (HBV) protein X; leading to prevent ubiquitination of TRPC4AP by SKP2. Phosphorylated by GSK3B; phosphorylation is required for ubiquitination. In terms of processing, ubiquitinated by a SCF (SKP1-CUL1-F-box protein) E3 ubiquitin-protein ligase containing SKP2, leading to its degradation. Phosphorylation by GSK3B is required for ubiquitination.

It localises to the cytoplasm. Its subcellular location is the perinuclear region. It participates in protein modification; protein ubiquitination. Its function is as follows. Substrate-recognition component of a DCX (DDB1-CUL4-X-box) E3 ubiquitin-protein ligase complex required for cell cycle control. The DCX(TRPC4AP) complex specifically mediates the polyubiquitination and subsequent degradation of MYC as part of the DesCEND (destruction via C-end degrons) pathway. The DesCEND (destruction via C-end degrons) pathway recognizes a C-degron located at the extreme C terminus of target proteins, leading to their ubiquitination and degradation. The DCX(TRPC4AP) complex specifically recognizes proteins with an arginine at the minus 3 position (R-3 motif) at the C-terminus, such as MYC, leading to their ubiquitination and degradation. Also participates in the activation of NFKB1 in response to ligation of TNFRSF1A, possibly by linking TNFRSF1A to the IKK signalosome. Involved in JNK activation via its interaction with TRAF2. Also involved in elevation of endoplasmic reticulum Ca(2+) storage reduction in response to CHRM1. The sequence is that of Short transient receptor potential channel 4-associated protein from Homo sapiens (Human).